The chain runs to 134 residues: Cystatin-1 (134 aa).

A signal peptide spans 1 to 17 (MKAIYLILTVLCGFSAS). Residues 21–116 (GGWRDKDVDD…CTAIIWTRSW (96 aa)) form the Cystatin domain. Residues 65–69 (QVVSG) carry the Secondary area of contact motif. 2 disulfide bridges follow: Cys83–Cys96 and Cys107–Cys127.

The protein belongs to the cystatin family. As to expression, expressed by the venom gland.

The protein resides in the secreted. Inhibits various C1 cysteine proteases. This protein has no toxic activity and its function in the venom is unknown. It may play a role as a housekeeping or regulatory protein. The chain is Cystatin-1 from Chilobrachys guangxiensis (Chinese earth tiger tarantula).